The primary structure comprises 196 residues: Serine/arginine-rich splicing factor RSZ22A (196 aa).

One can recognise an RRM domain in the interval 2-71 (SRVYVGNLDP…NGWRVEQSHN (70 aa)). Ser48 is modified (phosphoserine). Residues 58–70 (VDGKNGWRVEQSH) show a composition bias toward basic and acidic residues. A disordered region spans residues 58–196 (VDGKNGWRVE…GLKDVRRSRS (139 aa)). Gly residues predominate over residues 72–87 (RGGGGGRGGGRGGGDG). Basic and acidic residues predominate over residues 88–100 (GRGRGGSDLKCYE). The CCHC-type zinc-finger motif lies at 96–113 (LKCYECGESGHFARECRS). The segment covering 119–135 (GRRRSRSRSRSPPRYRK) has biased composition (basic residues). Ser136, Ser144, Ser146, Ser151, Ser159, Ser170, and Ser196 each carry phosphoserine. Residues 139-149 (YGGRRSYSPRA) show a composition bias toward low complexity.

The protein belongs to the splicing factor SR family. RSZ subfamily. In terms of assembly, component of the spliceosome. In terms of processing, extensively phosphorylated on serine residues in the RS domain.

It is found in the nucleus. Functionally, probably involved in intron recognition and spliceosome assembly. This is Serine/arginine-rich splicing factor RSZ22A (RSZ22A) from Arabidopsis thaliana (Mouse-ear cress).